Consider the following 434-residue polypeptide: Enolase (434 aa).

Gln165 is a binding site for (2R)-2-phosphoglycerate. Glu207 serves as the catalytic Proton donor. 3 residues coordinate Mg(2+): Asp244, Glu291, and Asp318. (2R)-2-phosphoglycerate-binding residues include Lys343, Arg372, Ser373, and Lys394. Lys343 acts as the Proton acceptor in catalysis.

Belongs to the enolase family. Mg(2+) serves as cofactor.

Its subcellular location is the cytoplasm. It localises to the secreted. The protein localises to the cell surface. It catalyses the reaction (2R)-2-phosphoglycerate = phosphoenolpyruvate + H2O. The protein operates within carbohydrate degradation; glycolysis; pyruvate from D-glyceraldehyde 3-phosphate: step 4/5. Its function is as follows. Catalyzes the reversible conversion of 2-phosphoglycerate (2-PG) into phosphoenolpyruvate (PEP). It is essential for the degradation of carbohydrates via glycolysis. This is Enolase from Macrococcus caseolyticus (strain JCSC5402) (Macrococcoides caseolyticum).